We begin with the raw amino-acid sequence, 366 residues long: 4-hydroxy-3-methylbut-2-en-1-yl diphosphate synthase (flavodoxin) (366 aa).

Cysteine 270, cysteine 273, cysteine 305, and glutamate 312 together coordinate [4Fe-4S] cluster.

This sequence belongs to the IspG family. It depends on [4Fe-4S] cluster as a cofactor.

It catalyses the reaction (2E)-4-hydroxy-3-methylbut-2-enyl diphosphate + oxidized [flavodoxin] + H2O + 2 H(+) = 2-C-methyl-D-erythritol 2,4-cyclic diphosphate + reduced [flavodoxin]. Its pathway is isoprenoid biosynthesis; isopentenyl diphosphate biosynthesis via DXP pathway; isopentenyl diphosphate from 1-deoxy-D-xylulose 5-phosphate: step 5/6. Converts 2C-methyl-D-erythritol 2,4-cyclodiphosphate (ME-2,4cPP) into 1-hydroxy-2-methyl-2-(E)-butenyl 4-diphosphate. In Wigglesworthia glossinidia brevipalpis, this protein is 4-hydroxy-3-methylbut-2-en-1-yl diphosphate synthase (flavodoxin).